The primary structure comprises 133 residues: Arginine decarboxylase proenzyme (133 aa).

The Schiff-base intermediate with substrate; via pyruvic acid role is filled by serine 81. Serine 81 is modified (pyruvic acid (Ser); by autocatalysis). Histidine 86 (proton acceptor; for processing activity) is an active-site residue. Catalysis depends on cysteine 101, which acts as the Proton donor; for catalytic activity.

This sequence belongs to the prokaryotic AdoMetDC family. Type 1 subfamily. Heterooctamer of four alpha and four beta chains arranged as a tetramer of alpha/beta heterodimers. The cofactor is pyruvate. Post-translationally, is synthesized initially as an inactive proenzyme. Formation of the active enzyme involves a self-maturation process in which the active site pyruvoyl group is generated from an internal serine residue via an autocatalytic post-translational modification. Two non-identical subunits are generated from the proenzyme in this reaction, and the pyruvate is formed at the N-terminus of the alpha chain, which is derived from the carboxyl end of the proenzyme. The post-translation cleavage follows an unusual pathway, termed non-hydrolytic serinolysis, in which the side chain hydroxyl group of the serine supplies its oxygen atom to form the C-terminus of the beta chain, while the remainder of the serine residue undergoes an oxidative deamination to produce ammonia and the pyruvoyl group blocking the N-terminus of the alpha chain.

The enzyme catalyses L-arginine + H(+) = agmatine + CO2. It functions in the pathway amine and polyamine biosynthesis; agmatine biosynthesis; agmatine from L-arginine: step 1/1. Specifically catalyzes the decarboxylation of L-arginine to agmatine. Has no S-adenosylmethionine decarboxylase (AdoMetDC) activity. The sequence is that of Arginine decarboxylase proenzyme from Pyrobaculum arsenaticum (strain DSM 13514 / JCM 11321 / PZ6).